Consider the following 192-residue polypeptide: dCTP deaminase, dUMP-forming (192 aa).

DCTP-binding positions include 101–106 (KSSLGR), Asp-119, 127–129 (TLE), Gln-148, Tyr-162, and Gln-174. Glu-129 acts as the Proton donor/acceptor in catalysis. Residues 162–192 (YGSGADGSRYQGQRGPTASRSHVKFHRTHVE) form a disordered region. Polar residues predominate over residues 171 to 181 (YQGQRGPTASR). Positions 182–192 (SHVKFHRTHVE) are enriched in basic residues.

This sequence belongs to the dCTP deaminase family. As to quaternary structure, homotrimer.

It carries out the reaction dCTP + 2 H2O = dUMP + NH4(+) + diphosphate. The protein operates within pyrimidine metabolism; dUMP biosynthesis; dUMP from dCTP: step 1/1. Its function is as follows. Bifunctional enzyme that catalyzes both the deamination of dCTP to dUTP and the hydrolysis of dUTP to dUMP without releasing the toxic dUTP intermediate. The protein is dCTP deaminase, dUMP-forming of Beutenbergia cavernae (strain ATCC BAA-8 / DSM 12333 / CCUG 43141 / JCM 11478 / NBRC 16432 / NCIMB 13614 / HKI 0122).